A 297-amino-acid polypeptide reads, in one-letter code: N-acetylmuramic acid 6-phosphate etherase (297 aa).

The SIS domain maps to 55 to 218 (ITKHFKQGGR…STGAMVGIGK (164 aa)). Glu83 acts as the Proton donor in catalysis. Residue Glu114 is part of the active site.

Belongs to the GCKR-like family. MurNAc-6-P etherase subfamily. As to quaternary structure, homodimer.

It carries out the reaction N-acetyl-D-muramate 6-phosphate + H2O = N-acetyl-D-glucosamine 6-phosphate + (R)-lactate. The protein operates within amino-sugar metabolism; N-acetylmuramate degradation. Its function is as follows. Specifically catalyzes the cleavage of the D-lactyl ether substituent of MurNAc 6-phosphate, producing GlcNAc 6-phosphate and D-lactate. The chain is N-acetylmuramic acid 6-phosphate etherase from Oenococcus oeni (strain ATCC BAA-331 / PSU-1).